The chain runs to 34 residues: uncharacterized protein (34 aa).

This is an uncharacterized protein from Haemophilus influenzae (strain ATCC 51907 / DSM 11121 / KW20 / Rd).